Consider the following 469-residue polypeptide: GDP-fucose protein O-fucosyltransferase 3 (469 aa).

The Cytoplasmic portion of the chain corresponds to methionine 1–arginine 9. Residues phenylalanine 10 to valine 30 form a helical; Signal-anchor for type II membrane protein membrane-spanning segment. Residues glutamate 31 to tryptophan 469 are Lumenal-facing. Residues asparagine 100, asparagine 158, asparagine 308, and asparagine 333 are each glycosylated (N-linked (GlcNAc...) asparagine). A disulfide bridge links cysteine 379 with cysteine 382. Asparagine 455 carries an N-linked (GlcNAc...) asparagine glycan.

It belongs to the glycosyltransferase 10 family.

The protein localises to the endoplasmic reticulum membrane. It catalyses the reaction L-threonyl-[protein] + GDP-beta-L-fucose = 3-O-(alpha-L-fucosyl)-L-threonyl-[protein] + GDP + H(+). The catalysed reaction is L-seryl-[protein] + GDP-beta-L-fucose = 3-O-(alpha-L-fucosyl)-L-seryl-[protein] + GDP + H(+). Its pathway is protein modification; protein glycosylation. In terms of biological role, protein O-fucosyltransferase that specifically catalyzes O-fucosylation of serine or threonine residues in EMI domains of target proteins. Attaches fucose through an O-glycosidic linkage. O-fucosylation of EMI domain-containing proteins may be required for facilitating protein folding and secretion. The chain is GDP-fucose protein O-fucosyltransferase 3 (fut10) from Xenopus laevis (African clawed frog).